The primary structure comprises 303 residues: UDP-N-acetylenolpyruvoylglucosamine reductase (303 aa).

The FAD-binding PCMH-type domain occupies Val-27 to Gly-191. Arg-171 is a catalytic residue. Ser-220 acts as the Proton donor in catalysis. Residue Glu-291 is part of the active site.

It belongs to the MurB family. The cofactor is FAD.

It is found in the cytoplasm. The catalysed reaction is UDP-N-acetyl-alpha-D-muramate + NADP(+) = UDP-N-acetyl-3-O-(1-carboxyvinyl)-alpha-D-glucosamine + NADPH + H(+). It functions in the pathway cell wall biogenesis; peptidoglycan biosynthesis. Cell wall formation. The sequence is that of UDP-N-acetylenolpyruvoylglucosamine reductase from Legionella pneumophila (strain Paris).